We begin with the raw amino-acid sequence, 303 residues long: Elongation factor Ts (303 aa).

An involved in Mg(2+) ion dislocation from EF-Tu region spans residues 82-85 (TDFV).

This sequence belongs to the EF-Ts family.

It localises to the cytoplasm. Associates with the EF-Tu.GDP complex and induces the exchange of GDP to GTP. It remains bound to the aminoacyl-tRNA.EF-Tu.GTP complex up to the GTP hydrolysis stage on the ribosome. This Clostridioides difficile (strain 630) (Peptoclostridium difficile) protein is Elongation factor Ts.